Consider the following 271-residue polypeptide: Putative carboxymethylenebutenolidase (271 aa).

Residues Cys-147, Asp-204, and His-236 contribute to the active site.

The protein belongs to the dienelactone hydrolase family.

The enzyme catalyses 2-(5-oxo-2,5-dihydrofuran-2-ylidene)acetate + H2O = 4-oxohex-2-enedioate + H(+). In Escherichia coli O157:H7, this protein is Putative carboxymethylenebutenolidase (ysgA).